A 227-amino-acid polypeptide reads, in one-letter code: Cytidylate kinase (227 aa).

12-20 (GPSGAGKGT) provides a ligand contact to ATP.

The protein belongs to the cytidylate kinase family. Type 1 subfamily.

It is found in the cytoplasm. The catalysed reaction is CMP + ATP = CDP + ADP. It carries out the reaction dCMP + ATP = dCDP + ADP. In Erwinia tasmaniensis (strain DSM 17950 / CFBP 7177 / CIP 109463 / NCPPB 4357 / Et1/99), this protein is Cytidylate kinase.